We begin with the raw amino-acid sequence, 415 residues long: GPI mannosyltransferase 1 (415 aa).

A run of 9 helical transmembrane segments spans residues 8–28 (PSLV…YGAW), 82–102 (FFSF…WLIA), 134–154 (TRGS…WAVL), 158–178 (ITLA…PFVY), 222–242 (LLLT…MYIL), 284–304 (FESL…PIVL), 329–349 (SQYF…SSLM), 354–374 (LGIT…QQGY), and 387–407 (GLFL…GIII).

It belongs to the PIGM family.

It is found in the endoplasmic reticulum membrane. It participates in glycolipid biosynthesis; glycosylphosphatidylinositol-anchor biosynthesis. In terms of biological role, mannosyltransferase involved in glycosylphosphatidylinositol-anchor biosynthesis. Transfers the first alpha-1,4-mannose to GlcN-acyl-PI during GPI precursor assembly. Required for cell wall integrity. The sequence is that of GPI mannosyltransferase 1 (gpi14) from Aspergillus oryzae (strain ATCC 42149 / RIB 40) (Yellow koji mold).